We begin with the raw amino-acid sequence, 221 residues long: Woronin body major protein (221 aa).

Positions 219-221 (SRL) match the Microbody targeting signal motif.

This sequence belongs to the eIF-5A family. Hex1 subfamily. As to quaternary structure, forms oligomers. Self-assembles into hexagonal rods.

The protein resides in the cell septum. Its function is as follows. Major component of Woronin bodies, fungal-specific organelles that occlude septal pores in order to separate intact from damaged compartments. Hex1 binds directly or indirectly to the Woronin body tether that in turn is anchored at the rim of the septal pore. In Emericella nidulans (strain FGSC A4 / ATCC 38163 / CBS 112.46 / NRRL 194 / M139) (Aspergillus nidulans), this protein is Woronin body major protein.